Reading from the N-terminus, the 449-residue chain is Glucose-6-phosphate isomerase (449 aa).

Glu-291 functions as the Proton donor in the catalytic mechanism. Catalysis depends on residues His-312 and Lys-426.

It belongs to the GPI family.

The protein resides in the cytoplasm. The enzyme catalyses alpha-D-glucose 6-phosphate = beta-D-fructose 6-phosphate. It participates in carbohydrate biosynthesis; gluconeogenesis. It functions in the pathway carbohydrate degradation; glycolysis; D-glyceraldehyde 3-phosphate and glycerone phosphate from D-glucose: step 2/4. Its function is as follows. Catalyzes the reversible isomerization of glucose-6-phosphate to fructose-6-phosphate. The chain is Glucose-6-phosphate isomerase from Streptococcus pneumoniae (strain ATCC BAA-255 / R6).